We begin with the raw amino-acid sequence, 196 residues long: Putative 3-methyladenine DNA glycosylase (196 aa).

Belongs to the DNA glycosylase MPG family.

The sequence is that of Putative 3-methyladenine DNA glycosylase from Chlorobium phaeovibrioides (strain DSM 265 / 1930) (Prosthecochloris vibrioformis (strain DSM 265)).